A 341-amino-acid chain; its full sequence is Killer cell immunoglobulin-like receptor 2DL3 (341 aa).

Positions 1–21 (MSLMVVSMVCVGFFLLQGAWP) are cleaved as a signal peptide. The Extracellular portion of the chain corresponds to 22–245 (HEGVHRKPSL…SETGNPRHLH (224 aa)). Ig-like C2-type domains follow at residues 42–107 (EETV…VTHS) and 142–205 (GESV…FRDS). Disulfide bonds link cysteine 49–cysteine 100 and cysteine 149–cysteine 198. N-linked (GlcNAc...) asparagine glycosylation is found at asparagine 84, asparagine 178, and asparagine 211. Residues 220–239 (VTGNPSNSWPSPTEPSSETG) form a disordered region. Residues 223 to 239 (NPSNSWPSPTEPSSETG) are compositionally biased toward low complexity. Residues 246 to 265 (VLIGTSVVIILFILLLFFLL) traverse the membrane as a helical segment. Residues 266–341 (HRWCCNKKNA…VYTELPNAEP (76 aa)) are Cytoplasmic-facing.

This sequence belongs to the immunoglobulin superfamily. Interacts with ARRB2.

The protein resides in the cell membrane. Functionally, receptor on natural killer (NK) cells for HLA-C alleles (HLA-Cw1, HLA-Cw3 and HLA-Cw7). Inhibits the activity of NK cells thus preventing cell lysis. The protein is Killer cell immunoglobulin-like receptor 2DL3 of Homo sapiens (Human).